The sequence spans 290 residues: Acetylglutamate kinase (290 aa).

Residues 60 to 61 (GG), arginine 82, and asparagine 187 contribute to the substrate site.

Belongs to the acetylglutamate kinase family. ArgB subfamily.

The protein localises to the cytoplasm. It catalyses the reaction N-acetyl-L-glutamate + ATP = N-acetyl-L-glutamyl 5-phosphate + ADP. It participates in amino-acid biosynthesis; L-arginine biosynthesis; N(2)-acetyl-L-ornithine from L-glutamate: step 2/4. Functionally, catalyzes the ATP-dependent phosphorylation of N-acetyl-L-glutamate. This Marinobacter nauticus (strain ATCC 700491 / DSM 11845 / VT8) (Marinobacter aquaeolei) protein is Acetylglutamate kinase.